Here is a 422-residue protein sequence, read N- to C-terminus: UDP-N-acetylglucosamine 1-carboxyvinyltransferase (422 aa).

22-23 is a binding site for phosphoenolpyruvate; the sequence is KN. Residue arginine 93 participates in UDP-N-acetyl-alpha-D-glucosamine binding. Cysteine 117 acts as the Proton donor in catalysis. The residue at position 117 (cysteine 117) is a 2-(S-cysteinyl)pyruvic acid O-phosphothioketal. UDP-N-acetyl-alpha-D-glucosamine is bound by residues 122–126, aspartate 305, and isoleucine 327; that span reads RPVDQ.

The protein belongs to the EPSP synthase family. MurA subfamily.

The protein resides in the cytoplasm. The catalysed reaction is phosphoenolpyruvate + UDP-N-acetyl-alpha-D-glucosamine = UDP-N-acetyl-3-O-(1-carboxyvinyl)-alpha-D-glucosamine + phosphate. Its pathway is cell wall biogenesis; peptidoglycan biosynthesis. Cell wall formation. Adds enolpyruvyl to UDP-N-acetylglucosamine. The protein is UDP-N-acetylglucosamine 1-carboxyvinyltransferase of Bordetella parapertussis (strain 12822 / ATCC BAA-587 / NCTC 13253).